We begin with the raw amino-acid sequence, 610 residues long: UvrABC system protein C (610 aa).

A GIY-YIG domain is found at 16–94 (SQPGVYRMYD…IKLYQPRYNV (79 aa)). Positions 204 to 239 (DQVLTQLISRMETASQNLEFEEAARIRDQIQAVRRV) constitute a UVR domain.

It belongs to the UvrC family. Interacts with UvrB in an incision complex.

The protein resides in the cytoplasm. Functionally, the UvrABC repair system catalyzes the recognition and processing of DNA lesions. UvrC both incises the 5' and 3' sides of the lesion. The N-terminal half is responsible for the 3' incision and the C-terminal half is responsible for the 5' incision. The sequence is that of UvrABC system protein C from Escherichia coli (strain ATCC 8739 / DSM 1576 / NBRC 3972 / NCIMB 8545 / WDCM 00012 / Crooks).